We begin with the raw amino-acid sequence, 260 residues long: 3'-5' ssDNA/RNA exonuclease TatD (260 aa).

A divalent metal cation is bound by residues Glu-91, His-127, and His-152.

It belongs to the metallo-dependent hydrolases superfamily. TatD-type hydrolase family. TatD subfamily. In terms of assembly, monomer. Requires Mg(2+) as cofactor.

The protein localises to the cytoplasm. 3'-5' exonuclease that prefers single-stranded DNA and RNA. May play a role in the H(2)O(2)-induced DNA damage repair. The protein is 3'-5' ssDNA/RNA exonuclease TatD of Escherichia fergusonii (strain ATCC 35469 / DSM 13698 / CCUG 18766 / IAM 14443 / JCM 21226 / LMG 7866 / NBRC 102419 / NCTC 12128 / CDC 0568-73).